The primary structure comprises 194 residues: Ion-translocating oxidoreductase complex subunit B (194 aa).

The tract at residues 1–26 (MSGVLIAVAALLALAAVFGAVLGFAS) is hydrophobic. A 4Fe-4S domain is found at 32–90 (EGDPIVDQIDSLLPQTQCGQCGHPGCRPYAEAIAEGEEHNRCPPGGQDTVVALSELLGR). [4Fe-4S] cluster-binding residues include Cys49, Cys52, Cys57, Cys73, Cys116, Cys119, Cys122, Cys126, Cys146, Cys149, Cys152, and Cys156. 4Fe-4S ferredoxin-type domains lie at 107-136 (KVAYIREDECIGCTKCIQACPVDAIVGAAK) and 137-166 (LMHTVIVDECTGCDLCVEPCPVDCIDMLEV).

Belongs to the 4Fe4S bacterial-type ferredoxin family. RnfB subfamily. As to quaternary structure, the complex is composed of six subunits: RnfA, RnfB, RnfC, RnfD, RnfE and RnfG. It depends on [4Fe-4S] cluster as a cofactor.

The protein resides in the cell inner membrane. In terms of biological role, part of a membrane-bound complex that couples electron transfer with translocation of ions across the membrane. This chain is Ion-translocating oxidoreductase complex subunit B, found in Alcanivorax borkumensis (strain ATCC 700651 / DSM 11573 / NCIMB 13689 / SK2).